The chain runs to 383 residues: ATP phosphoribosyltransferase regulatory subunit (383 aa).

This sequence belongs to the class-II aminoacyl-tRNA synthetase family. HisZ subfamily. As to quaternary structure, heteromultimer composed of HisG and HisZ subunits.

The protein resides in the cytoplasm. Its pathway is amino-acid biosynthesis; L-histidine biosynthesis; L-histidine from 5-phospho-alpha-D-ribose 1-diphosphate: step 1/9. Its function is as follows. Required for the first step of histidine biosynthesis. May allow the feedback regulation of ATP phosphoribosyltransferase activity by histidine. The chain is ATP phosphoribosyltransferase regulatory subunit from Paraburkholderia phytofirmans (strain DSM 17436 / LMG 22146 / PsJN) (Burkholderia phytofirmans).